A 145-amino-acid polypeptide reads, in one-letter code: Spore coat protein YeeK (145 aa).

4 PG repeats span residues 9 to 15 (GGPGFGH), 22 to 28 (GHPGYGM), 32 to 38 (GYPGYGM), and 41 to 47 (GHPGYGM). 3 GGY repeats span residues 57 to 63 (GGVGGYP), 66 to 72 (GGYGGYP), and 74 to 80 (GGYGGSP). H4 repeat units lie at residues 99–105 (YHHHHDG), 111–117 (HHHHHVG), 121–127 (HHHHHDG), and 131–137 (HHHHHMG). Residues 100-138 (HHHHDGKDNLHHHHHHVGKDNHHHHHDGHYGHHHHHMGH) are compositionally biased toward basic residues. The interval 100-145 (HHHHDGKDNLHHHHHHVGKDNHHHHHDGHYGHHHHHMGHWGKDGYK) is disordered.

The protein localises to the spore coat. Functionally, part of the spore coat. This Bacillus subtilis (strain 168) protein is Spore coat protein YeeK (yeeK).